Consider the following 253-residue polypeptide: Spindle pole component 29 (253 aa).

Residues 1–12 (MDYXNFGNSASK) show a composition bias toward polar residues. Disordered regions lie at residues 1–20 (MDYXNFGNSASKKFQDDTLN), 31–123 (KKLR…SSPV), and 210–231 (DMPYRRSSDNINKEGAREDRSS). Thr18 is modified (phosphothreonine). Position 65 is a phosphoserine (Ser65). Basic and acidic residues-rich tracts occupy residues 69 to 91 (KSDDRKVKSPLDDKLRRQLREGN) and 211 to 231 (MPYRRSSDNINKEGAREDRSS). Residue Thr240 is modified to Phosphothreonine; by MPS1.

Belongs to the SPC29 family. As to quaternary structure, component of the SPC110 complex containing at least CMD1, SPC29, SPC42 and SCP110. Interacts with BBP1. In terms of processing, MPS1-mediated phosphorylation at Thr-240 is required for spindle pole body duplication.

It is found in the nucleus. The protein resides in the cytoplasm. Its subcellular location is the cytoskeleton. It localises to the microtubule organizing center. The protein localises to the spindle pole body. In terms of biological role, component of the spindle pole body (SPB) required for the proper execution of spindle pole body (SPB) duplication. Links the central plaque component SPC42 to the inner plaque component SPC110. The sequence is that of Spindle pole component 29 (SPC29) from Saccharomyces cerevisiae (strain Zymaflore VL3) (Baker's yeast).